The following is a 156-amino-acid chain: Ribosomal RNA large subunit methyltransferase H (156 aa).

S-adenosyl-L-methionine contacts are provided by residues Leu73, Gly104, and 123–128 (LSDLTL).

It belongs to the RNA methyltransferase RlmH family. In terms of assembly, homodimer.

The protein localises to the cytoplasm. It carries out the reaction pseudouridine(1915) in 23S rRNA + S-adenosyl-L-methionine = N(3)-methylpseudouridine(1915) in 23S rRNA + S-adenosyl-L-homocysteine + H(+). Its function is as follows. Specifically methylates the pseudouridine at position 1915 (m3Psi1915) in 23S rRNA. The chain is Ribosomal RNA large subunit methyltransferase H from Methylibium petroleiphilum (strain ATCC BAA-1232 / LMG 22953 / PM1).